The sequence spans 253 residues: MPLHKYPPALWDVLKLKDGIYARLPEHYRRSLLEKHKPYPVHWKPHGLKYRLNPKSGQRERVQDVPILPYFPPQANKGLWGGEGWVTGYHYANNDKLSARVKKVWKPQLFKRELYSEILDKKFSITVTMRTLDLIDAAYGFDFYILKTPKEDLNSKVGMDFKRAMLMRLASKDSNLYPNDPSKRDQIYNKYKEFVIPMEEAEWVGLSLEEAVEKQRLLEKKDPTPLFKVYVEELVKQIETQTLAEPAIIGKKP.

Residues 1–55 (MPLHKYPPALWDVLKLKDGIYARLPEHYRRSLLEKHKPYPVHWKPHGLKYRLNPK) constitute a mitochondrion transit peptide.

The protein belongs to the bacterial ribosomal protein bL28 family. As to quaternary structure, component of the mitochondrial ribosome large subunit (39S) which comprises a 16S rRNA and about 50 distinct proteins.

It localises to the mitochondrion. This Xenopus laevis (African clawed frog) protein is Large ribosomal subunit protein bL28m (mrpl28).